Consider the following 167-residue polypeptide: Signal peptidase complex catalytic subunit SEC11 (167 aa).

Residues 1-9 (MNLRFELQK) lie on the Cytoplasmic side of the membrane. The chain crosses the membrane as a helical; Signal-anchor for type II membrane protein span at residues 10 to 30 (LLNVCFLFASAYMFWQGLAIA). Residues 31-167 (TNSASPIVVV…LGLSALLGGE (137 aa)) are Lumenal-facing. Residues S44, H83, and D109 each act as charge relay system in the active site. N-linked (GlcNAc...) asparagine glycosylation is present at N121. The tract at residues 153–164 (ALLGMLGLSALL) is C-terminal short (CTS) helix.

It belongs to the peptidase S26B family. As to quaternary structure, component of the signal peptidase complex (SPC) composed of a catalytic subunit SEC11 and three accessory subunits SPC1, SPC2 and SPC3. The complex induces a local thinning of the ER membrane which is used to measure the length of the signal peptide (SP) h-region of protein substrates. This ensures the selectivity of the complex towards h-regions shorter than 18-20 amino acids. SPC associates with the translocon complex.

Its subcellular location is the endoplasmic reticulum membrane. The enzyme catalyses Cleavage of hydrophobic, N-terminal signal or leader sequences from secreted and periplasmic proteins.. Its function is as follows. Catalytic component of the signal peptidase complex (SPC) which catalyzes the cleavage of N-terminal signal sequences from nascent proteins as they are translocated into the lumen of the endoplasmic reticulum. Specifically cleaves N-terminal signal peptides that contain a hydrophobic alpha-helix (h-region) shorter than 18-20 amino acids. This is Signal peptidase complex catalytic subunit SEC11 (SEC11) from Saccharomyces cerevisiae (strain Lalvin QA23) (Baker's yeast).